A 387-amino-acid chain; its full sequence is S-adenosylmethionine synthase (387 aa).

ATP is bound at residue histidine 17. Mg(2+) is bound at residue aspartate 19. Glutamate 45 contributes to the K(+) binding site. Positions 58 and 101 each coordinate L-methionine. The interval 101–111 (QSPDIAQGVDR) is flexible loop. Residues 168 to 170 (DAK), 234 to 235 (RF), aspartate 243, 249 to 250 (RK), alanine 266, and lysine 270 contribute to the ATP site. Aspartate 243 is an L-methionine binding site. Lysine 274 serves as a coordination point for L-methionine.

Belongs to the AdoMet synthase family. Homotetramer; dimer of dimers. Mg(2+) is required as a cofactor. It depends on K(+) as a cofactor.

Its subcellular location is the cytoplasm. It catalyses the reaction L-methionine + ATP + H2O = S-adenosyl-L-methionine + phosphate + diphosphate. Its pathway is amino-acid biosynthesis; S-adenosyl-L-methionine biosynthesis; S-adenosyl-L-methionine from L-methionine: step 1/1. In terms of biological role, catalyzes the formation of S-adenosylmethionine (AdoMet) from methionine and ATP. The overall synthetic reaction is composed of two sequential steps, AdoMet formation and the subsequent tripolyphosphate hydrolysis which occurs prior to release of AdoMet from the enzyme. The chain is S-adenosylmethionine synthase from Bordetella bronchiseptica (strain ATCC BAA-588 / NCTC 13252 / RB50) (Alcaligenes bronchisepticus).